Consider the following 831-residue polypeptide: Cysteine--tRNA ligase, cytoplasmic (831 aa).

Alanine 2 is modified (N-acetylalanine). The residue at position 102 (serine 102) is a Phosphoserine. Cysteine 138 lines the Zn(2+) pocket. Glycine 139 provides a ligand contact to L-cysteine. The short motif at 140–150 (PTVYDASHMGH) is the 'HIGH' region element. L-cysteine is bound at residue threonine 179. The short motif at 184–187 (KIIR) is the 'KIIK' region element. Serine 388 and serine 390 each carry phosphoserine. Positions 431, 456, and 460 each coordinate Zn(2+). Histidine 456 contributes to the L-cysteine binding site. Positions 489-493 (KMSKS) match the 'KMSKS' region motif. Lysine 492 contributes to the ATP binding site. Over residues 736–762 (GKKRAEEEKRRKKEEAARKKQEQEAAK) the composition is skewed to basic and acidic residues. Residues 736–766 (GKKRAEEEKRRKKEEAARKKQEQEAAKLAKM) form a disordered region. Position 829 is a phosphoserine (serine 829).

This sequence belongs to the class-I aminoacyl-tRNA synthetase family. Homodimer. The cofactor is Zn(2+).

The protein localises to the cytoplasm. The enzyme catalyses tRNA(Cys) + L-cysteine + ATP = L-cysteinyl-tRNA(Cys) + AMP + diphosphate. In terms of biological role, catalyzes the ATP-dependent ligation of cysteine to tRNA(Cys). This chain is Cysteine--tRNA ligase, cytoplasmic (Cars1), found in Mus musculus (Mouse).